The sequence spans 901 residues: HTH-type transcriptional regulator MalT (901 aa).

39–46 (SPAGYGKT) contacts ATP. Residues 829–894 (ELIRTSPLTQ…DAVQHAQQLL (66 aa)) enclose the HTH luxR-type domain. Residues 853–872 (NEQIAGELDVAATTIKTHIR) constitute a DNA-binding region (H-T-H motif).

The protein belongs to the MalT family. As to quaternary structure, monomer in solution. Oligomerizes to an active state in the presence of the positive effectors ATP and maltotriose.

With respect to regulation, activated by ATP and maltotriose, which are both required for DNA binding. Its function is as follows. Positively regulates the transcription of the maltose regulon whose gene products are responsible for uptake and catabolism of malto-oligosaccharides. Specifically binds to the promoter region of its target genes, recognizing a short DNA motif called the MalT box. The polypeptide is HTH-type transcriptional regulator MalT (Klebsiella pneumoniae (strain 342)).